We begin with the raw amino-acid sequence, 230 residues long: Carbohydrate deacetylase (230 aa).

Residues His-59 and His-123 each contribute to the Mg(2+) site.

Belongs to the YdjC deacetylase family. As to quaternary structure, homodimer. Mg(2+) serves as cofactor.

In terms of biological role, probably catalyzes the deacetylation of acetylated carbohydrates an important step in the degradation of oligosaccharides. The chain is Carbohydrate deacetylase from Oceanobacillus iheyensis (strain DSM 14371 / CIP 107618 / JCM 11309 / KCTC 3954 / HTE831).